We begin with the raw amino-acid sequence, 475 residues long: ATP synthase subunit beta, chloroplastic (475 aa).

155 to 162 (GGAGVGKT) contacts ATP.

It belongs to the ATPase alpha/beta chains family. F-type ATPases have 2 components, CF(1) - the catalytic core - and CF(0) - the membrane proton channel. CF(1) has five subunits: alpha(3), beta(3), gamma(1), delta(1), epsilon(1). CF(0) has four main subunits: a(1), b(1), b'(1) and c(9-12).

It localises to the plastid. It is found in the chloroplast thylakoid membrane. The enzyme catalyses ATP + H2O + 4 H(+)(in) = ADP + phosphate + 5 H(+)(out). In terms of biological role, produces ATP from ADP in the presence of a proton gradient across the membrane. The catalytic sites are hosted primarily by the beta subunits. The sequence is that of ATP synthase subunit beta, chloroplastic from Guillardia theta (Cryptophyte).